Here is a 503-residue protein sequence, read N- to C-terminus: Glycerol kinase (503 aa).

Position 14 (Thr14) interacts with ADP. ATP-binding residues include Thr14, Thr15, and Ser16. Residue Thr14 coordinates sn-glycerol 3-phosphate. Arg18 serves as a coordination point for ADP. Positions 84, 85, 136, and 246 each coordinate sn-glycerol 3-phosphate. Positions 84, 85, 136, 246, and 247 each coordinate glycerol. Thr268 and Gly311 together coordinate ADP. ATP is bound by residues Thr268, Gly311, Gln315, and Gly412. Gly412 and Asn416 together coordinate ADP.

It belongs to the FGGY kinase family.

The enzyme catalyses glycerol + ATP = sn-glycerol 3-phosphate + ADP + H(+). It participates in polyol metabolism; glycerol degradation via glycerol kinase pathway; sn-glycerol 3-phosphate from glycerol: step 1/1. Its activity is regulated as follows. Inhibited by fructose 1,6-bisphosphate (FBP). Key enzyme in the regulation of glycerol uptake and metabolism. Catalyzes the phosphorylation of glycerol to yield sn-glycerol 3-phosphate. In Haemophilus influenzae (strain PittEE), this protein is Glycerol kinase.